A 414-amino-acid chain; its full sequence is MSAEKTENLSWIDKRFPLSETWRNHLSEYYAPKNLNFWSFFGSLAILTLVIQIVTGVWLAMSYKPDAGLAFASVEYIMRDVDWGWLIRYMHSTGASMFFIVIYLHMFRGLLWGSYRKPRELLWMIGVVIYLVMMATAFFGYLLPWGQMSYWGAQVIVNLFAAVPVVGEDLSVWVRGDFVISDATLNRFFAFHFLLPFLLAGLVFLHIVALHHVGSNNPDGIEIKEGPKGNRWSDKAPADGIPFHPYYTVKDLMGVVVFLAIFGYVMFFNPTMGGLFLEAPNFQPANPMQTPAHIAPVWYFTPFYAMLRAVPPMYGSQFPGVVVMFAAILILFVLPWLDRSPVKSMRYKGPIFKWATGIFVVSFVALAWLGIQPASDFYTLLSQIFTVLYFAYFLLMPIYSSLDKTKPVPERVTS.

2 helical membrane passes run 40 to 60 (FFGSLAILTLVIQIVTGVWLA) and 84 to 104 (GWLIRYMHSTGASMFFIVIYL). Heme b is bound by residues H91 and H105. A run of 8 helical transmembrane segments spans residues 121-141 (LLWMIGVVIYLVMMATAFFGY), 154-174 (QVIVNLFAAVPVVGEDLSVWV), 188-208 (FFAFHFLLPFLLAGLVFLHIV), 252-272 (LMGVVVFLAIFGYVMFFNPTM), 294-314 (IAPVWYFTPFYAMLRAVPPMY), 317-337 (QFPGVVVMFAAILILFVLPWL), 351-371 (IFKWATGIFVVSFVALAWLGI), and 378-398 (YTLLSQIFTVLYFAYFLLMPI). Heme b is bound by residues H192 and H206.

This sequence belongs to the cytochrome b family. In terms of assembly, the main subunits of complex b-c1 are: cytochrome b, cytochrome c1 and the Rieske protein. Heme b serves as cofactor.

The protein localises to the cell membrane. Functionally, component of the ubiquinol-cytochrome c reductase complex (complex III or cytochrome b-c1 complex), which is a respiratory chain that generates an electrochemical potential coupled to ATP synthesis. The sequence is that of Cytochrome b (petB) from Allochromatium vinosum (strain ATCC 17899 / DSM 180 / NBRC 103801 / NCIMB 10441 / D) (Chromatium vinosum).